The following is a 38-amino-acid chain: Potassium channel toxin alpha-KTx 3.8 (38 aa).

3 cysteine pairs are disulfide-bonded: Cys-8–Cys-28, Cys-14–Cys-33, and Cys-18–Cys-35. The interaction with Ca(2+)-activated K(+) channels stretch occupies residues 26 to 33 (GKCMNGKC).

As to expression, expressed by the venom gland.

Its subcellular location is the secreted. In terms of biological role, potassium channel inhibitor. The protein is Potassium channel toxin alpha-KTx 3.8 of Hottentotta tamulus sindicus (Scorpion).